Here is a 704-residue protein sequence, read N- to C-terminus: G-protein coupled receptor-associated protein LMBRD2B (704 aa).

Residues 1–3 (MSG) are Extracellular-facing. Residues 4 to 21 (AALGIEIVVVFFLALFLL) form a helical membrane-spanning segment. Over 22-33 (HRYGDFKKQQRM) the chain is Cytoplasmic. A helical membrane pass occupies residues 34–54 (VLFGTLLAWYLCFLIVFILPL). Residues 55-111 (DVSTTIYNQCLIDQEAQTQTPSVSPVLSEQTTANASISPAKSTQRVCYKPWSYIPDG) lie on the Extracellular side of the membrane. A glycan (N-linked (GlcNAc...) asparagine) is linked at Asn-88. Residues 112 to 132 (IMPVFWRVVYWTSQCLTWLLL) form a helical membrane-spanning segment. Over 133 to 157 (PFMQSYARSGGFTITGKIKTALIEN) the chain is Cytoplasmic. A helical transmembrane segment spans residues 158-178 (AIYYGTYLFIFGSLLIYVAVH). The Extracellular segment spans residues 179–192 (PQWHLSWYELQTIG). The helical transmembrane segment at 193 to 213 (ITAANTWGLFLLVLLLGYGLV) threads the bilayer. Residues 214-393 (DIPRSYWEAS…ECLLKQWFYR (180 aa)) lie on the Cytoplasmic side of the membrane. A coiled-coil region spans residues 235–266 (KAAKLMTEKADSEENLEDVMEEVRKINESIKY). Residues 394–414 (VLAVVLALFSVAVVWSECTFF) form a helical membrane-spanning segment. The Extracellular segment spans residues 415 to 438 (STHPVLSLFAVFIQLAERDYNYLY). The helical transmembrane segment at 439-459 (IEMACFITIFFLCTCVYSTVF) threads the bilayer. Topologically, residues 460-481 (RIRVFNYYYLASHHQTDAYSLQ) are cytoplasmic. The helical transmembrane segment at 482–502 (FSGMLFCRLTPPLCLNFLGLI) threads the bilayer. At 503 to 527 (HMDSAISHQAKKQTAYTSIMGSMRV) the chain is on the extracellular side. Residues 528–548 (LSFIANGFYIYYPMLIVVLCI) traverse the membrane as a helical segment. The Cytoplasmic segment spans residues 549–704 (ATYFSLGTRC…SSRNRIFDDV (156 aa)). Residues 576 to 612 (DLIDEGRELLRRERRKRQRIEDGENRRREWRERYAQR) are a coiled coil. 2 disordered regions span residues 613–654 (DENA…QSGR) and 672–704 (TLTD…FDDV). Polar residues predominate over residues 631 to 654 (YGETLNANTNRQAKYTRSGSQSGR).

It belongs to the LIMR family.

The protein localises to the cell membrane. In terms of biological role, may associate with G-protein coupled receptors and regulate downstream signaling pathways. This Danio rerio (Zebrafish) protein is G-protein coupled receptor-associated protein LMBRD2B (lmbrd2b).